We begin with the raw amino-acid sequence, 432 residues long: Glutamyl-tRNA reductase (432 aa).

Residues 49–52, Ser-101, 106–108, and Gln-112 each bind substrate; these read TCNR and EPQ. Cys-50 serves as the catalytic Nucleophile. Position 181–186 (181–186) interacts with NADP(+); that stretch reads GAGETI. The disordered stretch occupies residues 408–432; sequence PEKPGYRHPPVATPIVRTDDANPAP.

Belongs to the glutamyl-tRNA reductase family. In terms of assembly, homodimer.

It catalyses the reaction (S)-4-amino-5-oxopentanoate + tRNA(Glu) + NADP(+) = L-glutamyl-tRNA(Glu) + NADPH + H(+). It participates in porphyrin-containing compound metabolism; protoporphyrin-IX biosynthesis; 5-aminolevulinate from L-glutamyl-tRNA(Glu): step 1/2. Its function is as follows. Catalyzes the NADPH-dependent reduction of glutamyl-tRNA(Glu) to glutamate 1-semialdehyde (GSA). The sequence is that of Glutamyl-tRNA reductase from Xanthomonas campestris pv. campestris (strain 8004).